We begin with the raw amino-acid sequence, 227 residues long: Endolytic peptidoglycan transglycosylase RlpA (227 aa).

The signal sequence occupies residues 1–21 (MMNHKFVLLILLIFYCFFLSG). C22 carries the N-palmitoyl cysteine lipid modification. C22 carries the S-diacylglycerol cysteine lipid modification.

Belongs to the RlpA family.

The protein resides in the cell membrane. Its function is as follows. Lytic transglycosylase with a strong preference for naked glycan strands that lack stem peptides. The protein is Endolytic peptidoglycan transglycosylase RlpA of Rickettsia bellii (strain RML369-C).